The primary structure comprises 556 residues: Insulin-like growth factor 2 mRNA-binding protein 2 (556 aa).

RRM domains are found at residues 3–76 (NKLY…YSVS) and 82–157 (RKIQ…YIPD). Residue S11 is modified to Phosphoserine. The tract at residues 156–188 (PDEEVSSPSPPQRAQRGDHSSREQGHAPGGTSQ) is disordered. Phosphoserine occurs at positions 162 and 164. Positions 170–180 (QRGDHSSREQG) are enriched in basic and acidic residues. KH domains are found at residues 193–258 (DFPL…CRMI), 274–341 (EIPL…EIEI), 384–449 (QEIV…QGRI), and 466–532 (KLEA…QRKI). T507 carries the post-translational modification Phosphothreonine.

This sequence belongs to the RRM IMP/VICKZ family. As to quaternary structure, can form homooligomers and heterooligomers with IGF2BP1 and IGF2BP3 in an RNA-dependent manner. Interacts with HNRPD. Interacts with IGF2BP1. Interacts with ELAVL1, DHX9, HNRNPU, MATR3 and PABPC1.

The protein resides in the nucleus. It localises to the cytoplasm. The protein localises to the P-body. It is found in the stress granule. RNA-binding factor that recruits target transcripts to cytoplasmic protein-RNA complexes (mRNPs). This transcript 'caging' into mRNPs allows mRNA transport and transient storage. It also modulates the rate and location at which target transcripts encounter the translational apparatus and shields them from endonuclease attacks or microRNA-mediated degradation. Preferentially binds to N6-methyladenosine (m6A)-containing mRNAs and increases their stability. Binds to the 5'-UTR of the insulin-like growth factor 2 (IGF2) mRNAs. Binding is isoform-specific. Binds to beta-actin/ACTB and MYC transcripts. Increases MYC mRNA stability by binding to the coding region instability determinant (CRD) and binding is enhanced by m6A-modification of the CRD. The chain is Insulin-like growth factor 2 mRNA-binding protein 2 (IGF2BP2) from Pongo abelii (Sumatran orangutan).